A 540-amino-acid chain; its full sequence is Glucose-6-phosphate isomerase (540 aa).

Glutamate 350 serves as the catalytic Proton donor. Residues histidine 381 and lysine 503 contribute to the active site.

Belongs to the GPI family.

Its subcellular location is the cytoplasm. The catalysed reaction is alpha-D-glucose 6-phosphate = beta-D-fructose 6-phosphate. Its pathway is carbohydrate biosynthesis; gluconeogenesis. The protein operates within carbohydrate degradation; glycolysis; D-glyceraldehyde 3-phosphate and glycerone phosphate from D-glucose: step 2/4. Its function is as follows. Catalyzes the reversible isomerization of glucose-6-phosphate to fructose-6-phosphate. In Paraburkholderia phymatum (strain DSM 17167 / CIP 108236 / LMG 21445 / STM815) (Burkholderia phymatum), this protein is Glucose-6-phosphate isomerase.